The sequence spans 129 residues: D-ribose pyranase (129 aa).

Histidine 20 (proton donor) is an active-site residue. Residues aspartate 28, histidine 96, and 118-120 (YAN) each bind substrate.

It belongs to the RbsD / FucU family. RbsD subfamily. As to quaternary structure, homodecamer.

The protein localises to the cytoplasm. The catalysed reaction is beta-D-ribopyranose = beta-D-ribofuranose. It functions in the pathway carbohydrate metabolism; D-ribose degradation; D-ribose 5-phosphate from beta-D-ribopyranose: step 1/2. Catalyzes the interconversion of beta-pyran and beta-furan forms of D-ribose. The chain is D-ribose pyranase from Exiguobacterium sp. (strain ATCC BAA-1283 / AT1b).